A 376-amino-acid polypeptide reads, in one-letter code: METLANRLDVCQDKMLELYEKDSNKLEDQIMHWQLMRVENALLYKARECGLTHIGHQVVPPLSVTKAKARSAIEVHVALLQLQESAYAQDSWTLRDTSREMWDTVPKKCWKKRGVTVEVRYDGDETKSMCYVHWRDIFTQNYSDDKWVKVAGHVSYEGLYYIHEGEQTFYVKFKDDAYVYGETGKWEVHVGGKVIHHHAFDPVSSTREIPAAGPLCTGDTTKASTETSVGATEGPQQKRQRLETLNWEQQQRQYPQTPSTQTTERASQPLDVTRTSDCDTTCPYTVGHPSDPDCAPVVHLKGDPNCLKCFRYRLHKGKRKLYCKTSSTWRWSCESENQAAFVTIWYTSYSQRNEFLSTVKVPPGIQVILGHMSMFV.

The transactivation domain stretch occupies residues 1–206 (METLANRLDV…HHAFDPVSST (206 aa)). The interval 211 to 271 (AAGPLCTGDT…TTERASQPLD (61 aa)) is disordered. 2 stretches are compositionally biased toward polar residues: residues 218-237 (GDTTKASTETSVGATEGPQQ) and 246-266 (NWEQQQRQYPQTPSTQTTERA). The segment at 294 to 376 (CAPVVHLKGD…VILGHMSMFV (83 aa)) is DNA-binding domain. Lys-301 is covalently cross-linked (Glycyl lysine isopeptide (Lys-Gly) (interchain with G-Cter in SUMO)).

Belongs to the papillomaviridae E2 protein family. In terms of assembly, binds DNA as homodimer. Interacts with protein E1; this interaction greatly increases E1 DNA-binding activity. Interacts with protein L1; this interaction enhances E2-dependent replication and transcription activation. Interacts with protein L2; this interaction inhibits E2 transcriptional activity but not DNA replication function E2. Interacts with protein E7; this interaction inhibits E7 oncogenic activity. Interacts with host TAF1; this interaction modulates E2-dependent transcriptional regulation. Interacts with host BRD4; this interaction mediates E2 transcriptional activation function. Additionally, the interaction with host BRD4 on mitotic chromosomes mediates tethering of the viral genome. Interacts with host TOPBP1; this interaction is required for optimal viral DNA replication. Post-translationally, phosphorylated. Sumoylation plays a regulatory role in E2 transcriptional activity.

Its subcellular location is the host nucleus. Functionally, plays a role in the initiation of viral DNA replication. A dimer of E2 interacts with a dimer of E1 in order to improve specificity of E1 DNA binding activity. Once the complex recognizes and binds DNA at specific sites, the E2 dimer is removed from DNA. E2 also regulates viral transcription through binding to the E2RE response element (5'-ACCNNNNNNGGT-3') present in multiple copies in the regulatory regions of the viral genome. Activates or represses transcription depending on E2RE's position with regards to proximal promoter elements including the TATA-box. Repression occurs by sterically hindering the assembly of the transcription initiation complex. The chain is Regulatory protein E2 from Homo sapiens (Human).